The chain runs to 703 residues: MGLHGDGGSPAAGAGPWRSGALRGSVAVFASVAAVFTLTLPRSLPGGDSGELITAAHELGVAHPPGYPLFTLLASLTITLFPFGSVAYRVNLLCGLFGAVAASLLFYTVFRLSGSHAGGILAAGVFSFSRLTWQWSIAAEVFSLNNLFVGLLMALTVRFEEATAAKERSKIAAIGAFSCGLSLCNQHTIVLYILCIIPWILFRLLKEKELTLSLLLRLTLAFSAGLLPYVYLPVSSYLSRARWTWGDQTTLRGFLTHFFREEYGTFSLAKSEVGSSVSTVLLSQVINMKTELSFNIQALAVWANICLARKDRRKSSVVWLFTGMLCLYSLFFAWRANLDISKPLFMGVVERFWLQSNAVVAVLAGLGLATLVSETNRVLHCTGIRNLEWLSAALFVAYQVYSNYSICDQRTNNVIDQFARNLLDSMPQDAIILLRGDLPGNALRYLHYCEGLRPDVSLVDQEMMTYEWYLPKMARHLPGVHFPGDRWNPVEGVLPSGMVTFNLYHFLEMNKQKETFVCIGIHEGDPTWKKDYSLWPWGSCDKLVPSKIVFNPEEWIERTRAIYNWTEAYERFGPSSWESVANEEMWQARMKTPFFIFSLAESAAVPADVKAQLYTHAYKLYKEIVYLQEEHPVNWHKNYAIACERMLRLPGTGIDPEVLLSEAIRHFHLYTQKAQNDPQRADIIAALKHLRRELQSLRNIKKV.

8 helical membrane-spanning segments follow: residues 20 to 40 (GALR…TLTL), 68 to 88 (PLFT…SVAY), 90 to 110 (VNLL…YTVF), 137 to 157 (IAAE…ALTV), 182 to 202 (SLCN…WILF), 218 to 238 (LTLA…SSYL), 314 to 334 (KSSV…FFAW), and 352 to 372 (FWLQ…ATLV). N-linked (GlcNAc...) asparagine glycosylation is found at N403 and N564.

This sequence belongs to the glycosyltransferase 117 (GT117) family.

The protein localises to the endoplasmic reticulum membrane. It catalyses the reaction a di-trans,poly-cis-dolichyl beta-D-mannosyl phosphate + L-seryl-[protein] = 3-O-(alpha-D-mannosyl)-L-seryl-[protein] + a di-trans,poly-cis-dolichyl phosphate + H(+). The catalysed reaction is a di-trans,poly-cis-dolichyl beta-D-mannosyl phosphate + L-threonyl-[protein] = 3-O-(alpha-D-mannosyl)-L-threonyl-[protein] + a di-trans,poly-cis-dolichyl phosphate + H(+). Functionally, O-mannosyl-transferase that transfers mannosyl residues to the hydroxyl group of serine or threonine residues of proteins. Specifically glycosylates the IPT/TIG domain of target proteins, such as MET and MST1R/RON. TMEM260-mediated O-mannosylated residues are composed of single mannose glycans that are not elongated or modified. This Mus musculus (Mouse) protein is Protein O-mannosyl-transferase TMEM260.